A 153-amino-acid chain; its full sequence is Ribosome maturation factor RimP (153 aa).

This sequence belongs to the RimP family.

The protein localises to the cytoplasm. Functionally, required for maturation of 30S ribosomal subunits. The protein is Ribosome maturation factor RimP of Picosynechococcus sp. (strain ATCC 27264 / PCC 7002 / PR-6) (Agmenellum quadruplicatum).